The following is a 130-amino-acid chain: Small ribosomal subunit protein uS11 (130 aa).

This sequence belongs to the universal ribosomal protein uS11 family. In terms of assembly, part of the 30S ribosomal subunit. Interacts with proteins S7 and S18. Binds to IF-3.

In terms of biological role, located on the platform of the 30S subunit, it bridges several disparate RNA helices of the 16S rRNA. Forms part of the Shine-Dalgarno cleft in the 70S ribosome. In Buchnera aphidicola subsp. Cinara cedri (strain Cc), this protein is Small ribosomal subunit protein uS11.